The following is a 291-amino-acid chain: Phycobilisome 32.1 kDa linker polypeptide, phycocyanin-associated, rod 1 (291 aa).

Residues 2–179 (AITTAASRLG…LYRGYANSDR (178 aa)) enclose the PBS-linker domain. A CpcD-like domain is found at 236 to 288 (SKLFRVEITAISAPGYPKVRRSNKAVIVPFEQLNQTLQQINRLGGKVASITPA).

This sequence belongs to the phycobilisome linker protein family. As to quaternary structure, part of 2 PBS rod complexes, the conventional CpcG-PBS rod and a photosystem I-specific CpcL-PBS rod, both of which include ferredoxin--NADP reductase (petH). CpcG-PBS has on average 3 stacked phycocyanin hexamers (PC, CpcA and CpcB). Linker CpcG connects the PC stack to the thylakoid, the hexamers are linked by 1 copy of CpcC1, 1 copy of CpcC2 and the stack is terminated by a single copy of CpcD. The CpcL-PBS has on average 5 stacked phycocyanin hexamers (PC, CpcA and CpcB). Linker CpcL connects the PC stack to the thylakoid, the hexamers are linked by 1 copy of CpcC1, 3 copies of CpcC2 and the stack is terminated by a single copy of CpcD.

The protein resides in the cellular thylakoid membrane. Rod linker protein, connecting hexameric phycocyanin (PC, made by cpcA and cpcB) rods in the phycobilisome (PBS). PC is the major phycobiliprotein in PBS rods. Linker polypeptides determine the state of aggregation and the location of the disk-shaped phycobiliprotein units within the phycobilisome and modulate their spectroscopic properties in order to mediate a directed and optimal energy transfer. In Synechocystis sp. (strain ATCC 27184 / PCC 6803 / Kazusa), this protein is Phycobilisome 32.1 kDa linker polypeptide, phycocyanin-associated, rod 1 (cpcC1).